The sequence spans 227 residues: UPF0758 protein Pcryo_2119 (227 aa).

Residues 102–224 (GLGRSQMVKD…TLSYAENSLP (123 aa)) form the MPN domain. The Zn(2+) site is built by His-173, His-175, and Asp-186. A JAMM motif motif is present at residues 173 to 186 (HNHPHTDAKPSTAD).

The protein belongs to the UPF0758 family.

The protein is UPF0758 protein Pcryo_2119 of Psychrobacter cryohalolentis (strain ATCC BAA-1226 / DSM 17306 / VKM B-2378 / K5).